Here is a 278-residue protein sequence, read N- to C-terminus: MAHDEQWLTPRLQTAATLCNQTPAATESPLWLGVDLGTCDVVSMVVDRDGQPVAVCLDWADVVRDGIVWDFFGAVTIVRRHLDTLEQQFGRRFSHAATSFPPGTDPRISINVLESAGLEVSHVLDEPTAVADLLQLDNAGVVDIGGGTTGIAIVKKGKVTYSADEATGGHHISLTLAGNRRISLEEAEQYKRGHGEEIWPAVKPVYEKMADIVARHIEGQGITDLWLAGGSCMQPGVAELFRKQFPALQVHLPQHSLFMTPLAIASSGREKAEGLYAK.

The protein belongs to the EutJ family.

The protein operates within amine and polyamine degradation; ethanolamine degradation. May protect ethanolamine ammonia-lyase (EAL, eutB-eutC) from inhibition, may function in assembling the bacterial microcompartment and/or in refolding EAL, suggesting it may have chaperone activity. This Escherichia coli (strain K12) protein is Ethanolamine utilization protein EutJ (eutJ).